Reading from the N-terminus, the 492-residue chain is Putative sucrose transport protein SUC6 (492 aa).

The interval 1 to 26 (MSDLQANKDAAAVNRQSSSSSADLNG) is disordered. Topologically, residues 1-33 (MSDLQANKDAAAVNRQSSSSSADLNGPSPMRKM) are cytoplasmic. Residues 14 to 23 (NRQSSSSSAD) show a composition bias toward polar residues. Residue S17 is modified to Phosphoserine. The helical transmembrane segment at 34 to 54 (ISVASIAAGIQFGWALQLSLL) threads the bilayer. At 55-68 (TPYVQLLGVPHKWS) the chain is on the extracellular side. Residues 69 to 89 (SFIWLCGPVSGLLVQPSVGYF) traverse the membrane as a helical segment. Residues 90-101 (SDRCKSRFGRRR) are Cytoplasmic-facing. Residues 102 to 122 (PFIAMGALLVAVAVVLIGYAA) form a helical membrane-spanning segment. Over 123–139 (DFGHSMGDKVDEPVKMR) the chain is Extracellular. The chain crosses the membrane as a helical span at residues 140-160 (AVVIFALGFWILDVANNTLQG). Topologically, residues 161 to 181 (PCRAFLGDLAAGDAKKTRTAN) are cytoplasmic. A helical transmembrane segment spans residues 182 to 202 (AFFSFFMAVGNVLGYAAGSYT). Over 203–224 (NLYKIFPFTMTKACDIYCANLK) the chain is Extracellular. The chain crosses the membrane as a helical span at residues 225–245 (SCFFLSITLLLVVTIIALWYV). Topologically, residues 246 to 277 (EDKQWSPKADSDNEKTPFFGEIFGAFKVMKRP) are cytoplasmic. Residues 278 to 298 (MWMLLIVTALNWIAWFPFLLY) form a helical membrane-spanning segment. Over 299 to 324 (DTDWMGREVYGGDSKGDDKMKKLYNQ) the chain is Extracellular. Residues 325–345 (GIHVGGLGLMLNSIVLGFMSL) traverse the membrane as a helical segment. At 346–359 (GIEGISRKMGGAKR) the chain is on the cytoplasmic side. Residues 360–380 (LWGAVNIILAVCLAMTVLVTK) form a helical membrane-spanning segment. The Extracellular portion of the chain corresponds to 381–403 (KAEEHRRIAGPMALPTDGIRAGA). The chain crosses the membrane as a helical span at residues 404–424 (LTLFALLGIPLAITFSIPFAL). Residues 425-446 (ASIISSSSGAGQGLSLGVLNMT) are Cytoplasmic-facing. Residues 447–467 (IVIPQMVVSFGVGPIDALFGG) form a helical membrane-spanning segment. At 468 to 469 (GN) the chain is on the extracellular side. A helical membrane pass occupies residues 470–490 (LPGFVVGAIAAAISSVVAFSV). Residues 491–492 (LP) are Cytoplasmic-facing.

The protein belongs to the glycoside-pentoside-hexuronide (GPH) cation symporter transporter (TC 2.A.2.4) family.

It is found in the cell membrane. It functions in the pathway glycan biosynthesis; sucrose metabolism. Its function is as follows. May be responsible for the transport of glucosides into the cell, with the concomitant uptake of protons (symport system). Does not seem to transport sucrose. The polypeptide is Putative sucrose transport protein SUC6 (Arabidopsis thaliana (Mouse-ear cress)).